Here is a 124-residue protein sequence, read N- to C-terminus: Small ribosomal subunit protein uS12 (124 aa).

Position 89 is a 3-methylthioaspartic acid (D89).

This sequence belongs to the universal ribosomal protein uS12 family. As to quaternary structure, part of the 30S ribosomal subunit. Contacts proteins S8 and S17. May interact with IF1 in the 30S initiation complex.

With S4 and S5 plays an important role in translational accuracy. In terms of biological role, interacts with and stabilizes bases of the 16S rRNA that are involved in tRNA selection in the A site and with the mRNA backbone. Located at the interface of the 30S and 50S subunits, it traverses the body of the 30S subunit contacting proteins on the other side and probably holding the rRNA structure together. The combined cluster of proteins S8, S12 and S17 appears to hold together the shoulder and platform of the 30S subunit. The polypeptide is Small ribosomal subunit protein uS12 (Arthrobacter sp. (strain FB24)).